The following is a 208-amino-acid chain: Protein-L-isoaspartate O-methyltransferase (208 aa).

Ser59 is a catalytic residue.

It belongs to the methyltransferase superfamily. L-isoaspartyl/D-aspartyl protein methyltransferase family.

It localises to the cytoplasm. It catalyses the reaction [protein]-L-isoaspartate + S-adenosyl-L-methionine = [protein]-L-isoaspartate alpha-methyl ester + S-adenosyl-L-homocysteine. Its function is as follows. Catalyzes the methyl esterification of L-isoaspartyl residues in peptides and proteins that result from spontaneous decomposition of normal L-aspartyl and L-asparaginyl residues. It plays a role in the repair and/or degradation of damaged proteins. This Pectobacterium atrosepticum (strain SCRI 1043 / ATCC BAA-672) (Erwinia carotovora subsp. atroseptica) protein is Protein-L-isoaspartate O-methyltransferase.